The primary structure comprises 479 residues: Sulfate adenylyltransferase subunit 1 (479 aa).

Residues 25 to 239 form the tr-type G domain; sequence KSLLRFLTCG…EVLETVDIQR (215 aa). Residues 34–41 are G1; sequence GSVDDGKS. Position 34–41 (34–41) interacts with GTP; it reads GSVDDGKS. Positions 92–96 are G2; that stretch reads GITID. Residues 113-116 are G3; sequence DTPG. GTP-binding positions include 113-117 and 168-171; these read DTPGH and NKMD. A G4 region spans residues 168–171; sequence NKMD. The G5 stretch occupies residues 206–208; it reads SAL.

The protein belongs to the TRAFAC class translation factor GTPase superfamily. Classic translation factor GTPase family. CysN/NodQ subfamily. Heterodimer composed of CysD, the smaller subunit, and CysN.

It catalyses the reaction sulfate + ATP + H(+) = adenosine 5'-phosphosulfate + diphosphate. It participates in sulfur metabolism; hydrogen sulfide biosynthesis; sulfite from sulfate: step 1/3. With CysD forms the ATP sulfurylase (ATPS) that catalyzes the adenylation of sulfate producing adenosine 5'-phosphosulfate (APS) and diphosphate, the first enzymatic step in sulfur assimilation pathway. APS synthesis involves the formation of a high-energy phosphoric-sulfuric acid anhydride bond driven by GTP hydrolysis by CysN coupled to ATP hydrolysis by CysD. The protein is Sulfate adenylyltransferase subunit 1 of Salmonella dublin (strain CT_02021853).